The primary structure comprises 402 residues: Tryptophan synthase beta chain (402 aa).

Residue lysine 91 is modified to N6-(pyridoxal phosphate)lysine.

This sequence belongs to the TrpB family. In terms of assembly, tetramer of two alpha and two beta chains. Pyridoxal 5'-phosphate serves as cofactor.

It catalyses the reaction (1S,2R)-1-C-(indol-3-yl)glycerol 3-phosphate + L-serine = D-glyceraldehyde 3-phosphate + L-tryptophan + H2O. It participates in amino-acid biosynthesis; L-tryptophan biosynthesis; L-tryptophan from chorismate: step 5/5. The beta subunit is responsible for the synthesis of L-tryptophan from indole and L-serine. This Lactococcus lactis subsp. lactis (strain IL1403) (Streptococcus lactis) protein is Tryptophan synthase beta chain (trpB).